The following is a 412-amino-acid chain: Alanyl-tRNA editing protein Aarsd1 (412 aa).

Residues His-109 and His-113 each coordinate Zn(2+). Position 174 is a phosphoserine (Ser-174). Residues Cys-209 and His-213 each contribute to the Zn(2+) site.

This sequence belongs to the class-II aminoacyl-tRNA synthetase family. Alax-L subfamily. It depends on Zn(2+) as a cofactor.

The protein localises to the cytoplasm. Functionally, functions in trans to edit the amino acid moiety from incorrectly charged Ser-tRNA(Ala). This is Alanyl-tRNA editing protein Aarsd1 (Aarsd1) from Mus musculus (Mouse).